A 190-amino-acid polypeptide reads, in one-letter code: Potassium-transporting ATPase KdpC subunit (190 aa).

The helical transmembrane segment at 10 to 30 (TFIFLLLITGGVYPLLTTVLG) threads the bilayer.

The protein belongs to the KdpC family. In terms of assembly, the system is composed of three essential subunits: KdpA, KdpB and KdpC.

The protein localises to the cell inner membrane. Its function is as follows. Part of the high-affinity ATP-driven potassium transport (or Kdp) system, which catalyzes the hydrolysis of ATP coupled with the electrogenic transport of potassium into the cytoplasm. This subunit acts as a catalytic chaperone that increases the ATP-binding affinity of the ATP-hydrolyzing subunit KdpB by the formation of a transient KdpB/KdpC/ATP ternary complex. The sequence is that of Potassium-transporting ATPase KdpC subunit from Escherichia coli O139:H28 (strain E24377A / ETEC).